A 239-amino-acid polypeptide reads, in one-letter code: IkB-like protein (239 aa).

ANK repeat units follow at residues 48 to 80 (SKIT…EIIS), 87 to 118 (DGNS…GIKV), 124 to 153 (NGIT…NPNQ), and 158 to 187 (KGFN…KPLF). Residues 81-87 (HYRRDKD) carry the Nuclear localization signal motif. The short motif at 203–214 (KKKPKIIITSCE) is the Nuclear localization signal element. The PxIxITxC motif; Interaction with host PPP3CA signature appears at 206–213 (PKIIITSC). An FLCV motif motif is present at residues 228–231 (FLCV).

Belongs to the asfivirus A238L family. As to quaternary structure, interacts with host PPIA. Interacts with host PPP3CA/Calcineurin. Interacts with host RELA/p65; interaction of the 32 kDa form with host RELA results in the formation of a stable complex with NF-kappa-B. Interacts with host PPP3R1. Interacts with host EP300; this interaction inhibits the association of host EP300 with host RELA, JUN and NFATC2. Post-translationally, the protein exists in a 28 kDa and a 32 kDa form, probably due to post-translational modifications which are neither phosphorylation, nor sumoylation.

It localises to the host nucleus. The protein resides in the host cytoplasm. Its function is as follows. IkB-like protein that inhibits the binding of NF-kappa-B to DNA, thereby downregulating pro-inflammatory cytokine production. Forms a heterodimer with the NF-kappa-B subunit RELA/p65 and prevents the activation of the NF-kappa-B transcription factor. Inhibits calcineurin function, which is required for the induction of nuclear factor of activated T cells (NFAT)-dependent immune response genes. Prevents the binding of substrates to calcineurin without affecting the phosphatase activity. Does not contain the serine residues that are phosphorylated by host IkB kinase and thus is not degraded following stimulation of the NFkB pathway. This chain is IkB-like protein (A238L), found in Ornithodoros (relapsing fever ticks).